The sequence spans 493 residues: Cobyric acid synthase (493 aa).

Positions 255 to 441 constitute a GATase cobBQ-type domain; it reads ELEIAVLRLP…LHGLLENGRW (187 aa). The active-site Nucleophile is Cys-336. His-433 is a catalytic residue.

Belongs to the CobB/CobQ family. CobQ subfamily.

It participates in cofactor biosynthesis; adenosylcobalamin biosynthesis. In terms of biological role, catalyzes amidations at positions B, D, E, and G on adenosylcobyrinic A,C-diamide. NH(2) groups are provided by glutamine, and one molecule of ATP is hydrogenolyzed for each amidation. In Synechococcus sp. (strain RCC307), this protein is Cobyric acid synthase.